A 138-amino-acid polypeptide reads, in one-letter code: uncharacterized protein (138 aa).

Helical transmembrane passes span 17–37 (IVVSVFYLILFFLILNITIYF), 43–63 (FTVVVKNSVLTSFFVNLLLVC), and 117–137 (FWWMNLIVYLVGSLVSGLVSL).

It is found in the cell membrane. This is an uncharacterized protein from Mycoplasma genitalium (strain ATCC 33530 / DSM 19775 / NCTC 10195 / G37) (Mycoplasmoides genitalium).